We begin with the raw amino-acid sequence, 41 residues long: Large ribosomal subunit protein bL36 (41 aa).

It belongs to the bacterial ribosomal protein bL36 family.

This chain is Large ribosomal subunit protein bL36, found in Erythrobacter litoralis (strain HTCC2594).